The following is a 521-amino-acid chain: GMP synthase [glutamine-hydrolyzing] (521 aa).

Residues 8–203 (KILILDFGAQ…VVDVCGCQTL (196 aa)) enclose the Glutamine amidotransferase type-1 domain. C85 functions as the Nucleophile in the catalytic mechanism. Residues H177 and E179 contribute to the active site. The 193-residue stretch at 204–396 (WTAANIIDDQ…LGLPRTMVYR (193 aa)) folds into the GMPS ATP-PPase domain. 231 to 237 (SGGVDSS) contacts ATP.

Homodimer.

It carries out the reaction XMP + L-glutamine + ATP + H2O = GMP + L-glutamate + AMP + diphosphate + 2 H(+). It participates in purine metabolism; GMP biosynthesis; GMP from XMP (L-Gln route): step 1/1. Its function is as follows. Catalyzes the synthesis of GMP from XMP. This chain is GMP synthase [glutamine-hydrolyzing], found in Stenotrophomonas maltophilia (strain R551-3).